A 167-amino-acid polypeptide reads, in one-letter code: Insertion element IS1 protein InsB (167 aa).

Belongs to the transposase 27 family.

Its function is as follows. Absolutely required for transposition of IS1. This Escherichia coli protein is Insertion element IS1 protein InsB (insB).